The following is a 918-amino-acid chain: E3 ubiquitin-protein ligase CBL-B-A (918 aa).

Residues 1 to 18 (MASGSGSSSSTSSSALSG) show a composition bias toward low complexity. The segment at 1–27 (MASGSGSSSSTSSSALSGRLPGSRSAN) is disordered. The tract at residues 46-178 (PPKQAAADRR…KAIFPSGQFQ (133 aa)) is 4H. The region spanning 46-354 (PPKQAAADRR…GRSYNPDLTG (309 aa)) is the Cbl-PTB domain. The interval 179–251 (GDNFRITKAD…FEFDIFTRLF (73 aa)) is EF-hand-like. Residues aspartate 232, threonine 234, asparagine 236, tyrosine 238, and glutamate 243 each contribute to the Ca(2+) site. Residues 252–354 (QPWGSILRNW…GRSYNPDLTG (103 aa)) are SH2-like. Arginine 297 serves as a coordination point for 4-O-phospho-L-tyrosine. The tract at residues 355-383 (LCEPTPHDHIKVTQEQYELYCEMGSTFQL) is linker. An RING-type zinc finger spans residues 384–423 (CKICAENDKDVKIEPCGHLMCTSCLTSWQESDGQGCPFCR). Disordered regions lie at residues 481–582 (NERQ…RTCR), 780–831 (FPPA…PPAR), and 857–918 (HSDP…MRPT). The segment covering 483–497 (RQNSPVTSPGSSPLS) has biased composition (polar residues). 2 stretches are compositionally biased toward pro residues: residues 554 to 576 (LPAPPPLLREPPPPPERPPPIPP) and 821 to 830 (PSQPPPPPPA). The span at 898-918 (KASNTKGELLLPNQNLIMRPT) shows a compositional bias: polar residues.

Interacts with several SH3 domain-containing proteins and with poly-ubiquitinated proteins.

The protein localises to the cytoplasm. The enzyme catalyses S-ubiquitinyl-[E2 ubiquitin-conjugating enzyme]-L-cysteine + [acceptor protein]-L-lysine = [E2 ubiquitin-conjugating enzyme]-L-cysteine + N(6)-ubiquitinyl-[acceptor protein]-L-lysine.. Its pathway is protein modification; protein ubiquitination. Functionally, E3 ubiquitin-protein ligase which accepts ubiquitin from specific E2 ubiquitin-conjugating enzymes, and transfers it to substrates, generally promoting their degradation by the proteasome. In Xenopus laevis (African clawed frog), this protein is E3 ubiquitin-protein ligase CBL-B-A (cblb-a).